The sequence spans 360 residues: S-adenosylmethionine:tRNA ribosyltransferase-isomerase (360 aa).

Belongs to the QueA family. As to quaternary structure, monomer.

The protein resides in the cytoplasm. It catalyses the reaction 7-aminomethyl-7-carbaguanosine(34) in tRNA + S-adenosyl-L-methionine = epoxyqueuosine(34) in tRNA + adenine + L-methionine + 2 H(+). Its pathway is tRNA modification; tRNA-queuosine biosynthesis. Transfers and isomerizes the ribose moiety from AdoMet to the 7-aminomethyl group of 7-deazaguanine (preQ1-tRNA) to give epoxyqueuosine (oQ-tRNA). This Burkholderia mallei (strain NCTC 10247) protein is S-adenosylmethionine:tRNA ribosyltransferase-isomerase.